The chain runs to 311 residues: Deacetoxycephalosporin C synthase (311 aa).

Positions 154–267 constitute a Fe2OG dioxygenase domain; that stretch reads DCEPLLRFRY…RTSSVFFLRP (114 aa).

This sequence belongs to the iron/ascorbate-dependent oxidoreductase family. Requires Fe cation as cofactor. The cofactor is L-ascorbate.

It carries out the reaction penicillin N + 2-oxoglutarate + O2 = deacetoxycephalosporin C + succinate + CO2 + H2O. It functions in the pathway antibiotic biosynthesis; cephalosporin C biosynthesis. Its function is as follows. Catalyzes the step from penicillin N to deacetoxy-cephalosporin C. The polypeptide is Deacetoxycephalosporin C synthase (cefE) (Streptomyces clavuligerus).